A 769-amino-acid polypeptide reads, in one-letter code: Phosphoribosylformylglycinamidine synthase subunit PurL (769 aa).

Over residues 1–13 (MTGTPSAPTTSPD) the composition is skewed to polar residues. The segment at 1–30 (MTGTPSAPTTSPDDQADGPGEGTVDRQPYR) is disordered. His-65 is a catalytic residue. ATP contacts are provided by Tyr-68 and Lys-109. Mg(2+) is bound at residue Glu-111. Residues 112 to 115 (SHNH) and Arg-134 contribute to the substrate site. His-113 serves as the catalytic Proton acceptor. Asp-135 is a binding site for Mg(2+). Gln-260 lines the substrate pocket. Asp-288 contacts Mg(2+). Position 337–339 (337–339 (ESQ)) interacts with substrate. ATP-binding residues include Asn-524 and Gly-561. Residue Asn-562 coordinates Mg(2+). Ser-564 is a binding site for substrate.

Belongs to the FGAMS family. As to quaternary structure, monomer. Part of the FGAM synthase complex composed of 1 PurL, 1 PurQ and 2 PurS subunits.

Its subcellular location is the cytoplasm. The enzyme catalyses N(2)-formyl-N(1)-(5-phospho-beta-D-ribosyl)glycinamide + L-glutamine + ATP + H2O = 2-formamido-N(1)-(5-O-phospho-beta-D-ribosyl)acetamidine + L-glutamate + ADP + phosphate + H(+). It participates in purine metabolism; IMP biosynthesis via de novo pathway; 5-amino-1-(5-phospho-D-ribosyl)imidazole from N(2)-formyl-N(1)-(5-phospho-D-ribosyl)glycinamide: step 1/2. Functionally, part of the phosphoribosylformylglycinamidine synthase complex involved in the purines biosynthetic pathway. Catalyzes the ATP-dependent conversion of formylglycinamide ribonucleotide (FGAR) and glutamine to yield formylglycinamidine ribonucleotide (FGAM) and glutamate. The FGAM synthase complex is composed of three subunits. PurQ produces an ammonia molecule by converting glutamine to glutamate. PurL transfers the ammonia molecule to FGAR to form FGAM in an ATP-dependent manner. PurS interacts with PurQ and PurL and is thought to assist in the transfer of the ammonia molecule from PurQ to PurL. This Parafrankia sp. (strain EAN1pec) protein is Phosphoribosylformylglycinamidine synthase subunit PurL.